The following is a 469-amino-acid chain: MEKKKPRTLVEKIWERHVVRRAEGEPDLLYVDLHMVHEVTSPQAFEALRLAGRRVRRPDLTVATMDHNVPTTDVRLGVRDRVSARQMEALRKNCEEFGIQLHEWGSPGQGIVHVIGPEMGLTQPGMVIVCGDSHTSTHGAFGALAFGIGTSEVEHVLATQTIPQRRPKTMAITVEGEAPPDVTAKDIMLGILHRIGTGGGVGHAIEYRGEAIRNLSMEGRMTICNMTIEGGGRAGMVAPDEKTYSYIEGRPHAPKGRAWEEALEYWQSLPTDEGATFDKEVVIDAAELVPYVSWGTTPAQTVPLDGEVPEPQNEGHERALRYMGLRPGTPIREIEVDTVFIGSCTNARIEDLRAAARVLEGHKVKEGIRAMVVPGSMRVKKQAEEEGLDEIFKKAGFEWRNAGCSMCLGMNPDILSPGERCASTSNRNFEGRQGKGGRTHLVSPVVAAATAVMGRFASPSELGVPVEVG.

Residues Cys-344, Cys-404, and Cys-407 each coordinate [4Fe-4S] cluster.

This sequence belongs to the aconitase/IPM isomerase family. LeuC type 1 subfamily. In terms of assembly, heterodimer of LeuC and LeuD. [4Fe-4S] cluster is required as a cofactor.

It catalyses the reaction (2R,3S)-3-isopropylmalate = (2S)-2-isopropylmalate. The protein operates within amino-acid biosynthesis; L-leucine biosynthesis; L-leucine from 3-methyl-2-oxobutanoate: step 2/4. Functionally, catalyzes the isomerization between 2-isopropylmalate and 3-isopropylmalate, via the formation of 2-isopropylmaleate. The sequence is that of 3-isopropylmalate dehydratase large subunit 1 from Rubrobacter xylanophilus (strain DSM 9941 / JCM 11954 / NBRC 16129 / PRD-1).